Consider the following 359-residue polypeptide: DNA-directed RNA polymerase subunit alpha (359 aa).

The segment at 1–226 is alpha N-terminal domain (alpha-NTD); sequence MLISQRPSLA…ELFGLARELN (226 aa). An alpha C-terminal domain (alpha-CTD) region spans residues 241 to 359; that stretch reads ADTIAAYAMP…GQDYAETEQL (119 aa). Residues 315–359 are disordered; the sequence is FDPSAAAAEYPSEGWASETETVGGLGRVEDNGYDDGQDYAETEQL. Positions 345–359 are enriched in acidic residues; it reads NGYDDGQDYAETEQL.

This sequence belongs to the RNA polymerase alpha chain family. Homodimer. The RNAP catalytic core consists of 2 alpha, 1 beta, 1 beta' and 1 omega subunit. When a sigma factor is associated with the core the holoenzyme is formed, which can initiate transcription.

The enzyme catalyses RNA(n) + a ribonucleoside 5'-triphosphate = RNA(n+1) + diphosphate. In terms of biological role, DNA-dependent RNA polymerase catalyzes the transcription of DNA into RNA using the four ribonucleoside triphosphates as substrates. This is DNA-directed RNA polymerase subunit alpha from Saccharopolyspora erythraea (strain ATCC 11635 / DSM 40517 / JCM 4748 / NBRC 13426 / NCIMB 8594 / NRRL 2338).